Reading from the N-terminus, the 781-residue chain is MERSGGNGGGGGGGGGGGGGYGGSGGGGGGAGVPSEGAAKGLSLLLAKSAEAASGRASQSTPRSAGMDGFLKSDERQRLAKERREEREKCLAAREQQILEKQKRAKLQYEKQIEERWRKLEEQRQREDQKRAAVEEKRKQKLREEEERLEAMMRRSLERTQQLELKKKCSWAGSPGPGGRDGESENTPPLPLTLATSTPPLDTGTTTAAAESTNACDKLSTSTMNLPKQTESPMSKHLSSSTVAISYSPDRALGSPLKSSYKSSPTRTTEKKKNTPISAMGDAGKGAMAGGEPSQMEKMKKGRVATSAASGGHGSPLRRCEPPEDISKRLSSPVKSKITSKTYPQSPKTAKPTYLGSPVKYYFPPIANEETPKKKAEKEKRNKEKEGAPGQQSTVLPREESLEKRMADKYATEKYVADKHATEKHSAPGGKAEHSAGKPTAGTTDAGEAAKILAEKRRQARLQKEQEEQERLEKEERERLEKEELKRKAEEERLRIEMAYKREQEKKRQEEEEKRKAEEKAKEKAEEELLSKEKQEKEKQEQEKKEKAMIEKQKEAAEAKAQDAAKQMRLEREQIMLQIEQERLERKKRIDEIMKRTRKSDASLEVKKEDPKVELQPPPDVENKANKAKPVVPNKIEINVLNTCQKVSGSERAAPETFPQDIFSTGLKPVGGPVHLDVLDGKSNSLDDSTEDVQSMDVSPVSKEELISIPEFSPVSEMIPGMSLDQNGTGNARALQDILDFTGPPAFPKKSSENLSLDDCNKNLIEGFNSPGQETTLNTFC.

The segment covering M1 to G32 has biased composition (gly residues). Disordered stretches follow at residues M1–G37, A50–R87, L120–Q567, and T597–A628. Basic and acidic residues-rich tracts occupy residues L71 to R87 and L120 to E158. The stretch at S73 to K168 forms a coiled coil. Residues L192–A210 show a composition bias toward low complexity. Polar residues-rich tracts occupy residues E211–I245 and L257–R267. The segment covering R318 to K328 has biased composition (basic and acidic residues). The segment covering R329–K348 has biased composition (polar residues). 4 stretches are compositionally biased toward basic and acidic residues: residues E370–G387, P397–A436, L453–Q567, and T597–V613.

Belongs to the MAP7 family. In terms of assembly, interacts (via N-terminus) with microtubules; facilitates microtubule stabilization. Interacts with kinesin-1 family members, KIF5A, KIF5B and KIF5C. In terms of tissue distribution, expressed predominantly in the glomerular layer of the olfactory bulb and Sertoli cells of the testis.

It localises to the cytoplasm. Its subcellular location is the cytoskeleton. The protein localises to the microtubule organizing center. The protein resides in the centrosome. It is found in the midbody. It localises to the cell projection. Its subcellular location is the neuron projection. The protein localises to the axon. Functionally, microtubule-stabilizing protein involved in the control of cell motility and neurite outgrowth. Acts as a critical cofactor for kinesin transport; in the proximal axon regulates kinesin-1 family members, KIF5A, KIF5B and KIF5C recruitment to microtubules and contributes to kinesin-1-mediated transport in the axons. This Mus musculus (Mouse) protein is MAP7 domain-containing protein 2 (Map7d2).